A 1773-amino-acid chain; its full sequence is MAPFKKLKLLLWKNFVLKKRKTLVTVLETLMPVLFSAIVLYLRLNSMPRNKANTNYPAVDVSLLPVYFHNYPLKSKFQLVYIPSKSETLKAVTEVVEQTFAVDFEVLGFPSVSLFENYIIKDPKSFYVLVGIVFHHDFNSSNEPLPLVVKYDLRFSYVQRNSISPPRHLFFQEDIEGWCTAFLYPPNLSQAPREFSYADGGHPGYNKEGFLAIQHAVDKAIMLHHAPKAALDMFKNLQVSVQRFPSGSHIQDPFLVILQNEFPLLLMLSFICVELIITNSILLEKERKQKEYMYLMGLENWLHWVAWFITFFLSALVTVSGMTVLFCTKMNGVAVFRNSNTTLIFIFLMCFAIATIFFAFMMSTFFQRAHVGTVIGGIVFFFTYLPYMYITFSYHQRTYSQKILSCLFSNVAMAMGVRFISLFEAEGTGIQWRNMGSVWGDFSFTQVLVMLLLDSFLYCLVAFLVESLFPRKIGMPKSWYIFAKCPLWRKKSFPVIPPLLVIGDPEKTSKGDFLQDEPAGHINAIEIQHLYKVFYTGRSKCIAVKDLSMNLYKGQITVLLGHNGAGKTTVCSVLTGLIPPSKGHAYIHGCEISKDMVRIRKNVGWCPQHDILFDNFTVTDHLYFYGQLKGLSHQDCHEKIEEMLHTLGLEDKRNSRSKFLSGGIKRKLAIGIALIAGSKVLILDEPTSGMDSSSRRAIWDLLQQQKGDRTVLLTTHFMDEADLLGDRIAILAKGELQCCGTPSFLKQKYGAGYYMTIIKTPLCDTEKLAKVIYHHIPNAILESRIGEEMIFTLPKKAMPRFEALFADLEQRQTELGISTFGASVTTMEEVFIRVCKLADPSTNVLTEKRPSLRHLPRNHRVPVDRIKCLHSRIFSLSSDQPIRLNTGFSLLCQQFYAMLLKKVAFSRRNWMLVLSVQILLPLVIIMLSLSFFNFKLRKLDNVPLELTLQTYGQTIVPFFIAENSRLDPQLSDNFVKMLVAAGQVPLRIQGSVENFLLKKAKEAPEDFDKLYVVAASFEDVNDHTTVKALFNNQAYHSPSLALALVDNVLFKLLSGANASITTTNYPQPQTAMELSETILYQGPKGHYLVVNFLFGIAFLSSSFSILTVGEKSIKSKNLQFLSGVSMAAFWLSALLWDLISFLVPTLLLVLVFFWYKEEAFAHPQSIPAVVLIMMLYGWAIIPLVYTVSFSFKTPGSGCVKLVAMLTFLSISPVVLVTVTSEKDLGYTELSDTLDHIFLIFPGHCLGMAFSNLYYNFEIKKFCNAKNLSDIDCNDVLEGYVVQKNIYAWESLGIGKYLTALAILGPVYITLLFLTEANAFCALKARLSGFFCKQKLRMLLNVTGAEDEDVLEEAENIKYHLDTLIKKSPLVVKELSKVYKEKVPLLAVNKVSFVVKEKECFGLLGLNGAGKTSIFNMLTREQPITSGDAFVKGFNIRTDMAKVQQWIGYCPEFDALLNFMTGREMLVMHARIRGIPECHIKTCVDMILENLLMCVYADKLVKTYSDGNKRVLSTAIALLGEPTVILLDEPSTGMDPVARRLVWDAVGRVRESGKTIVITSHSMEECEALCTRLAIMVQGQFKCLGSPQHLKSRFGSGYSLQAKVRRKWQQQMLEEFKAFVDLTFPGSSLEDEHQSMVQYYLPGQNLSWAKVFGIMEQAKKDYVLEDYSISQLSLEDIFLSFTRPVPDTKENIQQGQAALDSSLSPSNSRPISSPPSSPPSSPPSSPPSRPPSRPSQPPSRPPSRHPSSPSQPPSRPPSRHPSSPSQPPSEPVLL.

3 helical membrane-spanning segments follow: residues 22-42, 262-282, and 306-326; these read TLVTVLETLMPVLFSAIVLYL, FPLLLMLSFICVELIITNSIL, and AWFITFFLSALVTVSGMTVLF. N-linked (GlcNAc...) asparagine glycosylation is present at asparagine 340. A run of 4 helical transmembrane segments spans residues 342–362, 372–392, 403–423, and 444–464; these read TLIFIFLMCFAIATIFFAFMM, GTVIGGIVFFFTYLPYMYITF, ILSCLFSNVAMAMGVRFISLF, and FTQVLVMLLLDSFLYCLVAFL. In terms of domain architecture, ABC transporter 1 spans 525-758; that stretch reads IEIQHLYKVF…YGAGYYMTII (234 aa). 561-568 lines the ATP pocket; the sequence is GHNGAGKT. Asparagine 615 is a glycosylation site (N-linked (GlcNAc...) asparagine). Transmembrane regions (helical) follow at residues 912–932, 1088–1108, 1134–1154, 1166–1186, 1198–1218, 1236–1256, and 1293–1313; these read LVLSVQILLPLVIIMLSLSFF, LVVNFLFGIAFLSSSFSILTV, LLWDLISFLVPTLLLVLVFFW, IPAVVLIMMLYGWAIIPLVYT, CVKLVAMLTFLSISPVVLVTV, IFLIFPGHCLGMAFSNLYYNF, and IGKYLTALAILGPVYITLLFL. Asparagine 1340 carries an N-linked (GlcNAc...) asparagine glycan. Positions 1369-1602 constitute an ABC transporter 2 domain; it reads LVVKELSKVY…FGSGYSLQAK (234 aa). Residue 1404-1411 participates in ATP binding; sequence GLNGAGKT. Residues 1690–1773 are disordered; the sequence is NIQQGQAALD…SQPPSEPVLL (84 aa). Low complexity predominate over residues 1700–1710; it reads SSLSPSNSRPI. 2 stretches are compositionally biased toward pro residues: residues 1711-1740 and 1763-1773; these read SSPPSSPPSSPPSSPPSRPPSRPSQPPSRP and PSQPPSEPVLL.

Belongs to the ABC transporter superfamily. ABCA family. In terms of processing, N-glycosylated.

The protein resides in the endoplasmic reticulum membrane. It localises to the cytoplasm. The catalysed reaction is cholesterol(in) + ATP + H2O = cholesterol(out) + ADP + phosphate + H(+). Functionally, promotes cholesterol efflux from sperm which renders sperm capable of fertilization. Has also been shown to decrease levels of intracellular esterified neutral lipids including cholesteryl esters, fatty acid esters and triacylglycerols. The polypeptide is ATP-binding cassette sub-family A member 17 (Rattus norvegicus (Rat)).